The sequence spans 229 residues: Thymidylate kinase (229 aa).

G9 to S16 lines the ATP pocket.

This sequence belongs to the thymidylate kinase family.

The enzyme catalyses dTMP + ATP = dTDP + ADP. Its function is as follows. Phosphorylation of dTMP to form dTDP in both de novo and salvage pathways of dTTP synthesis. The chain is Thymidylate kinase from Roseiflexus castenholzii (strain DSM 13941 / HLO8).